We begin with the raw amino-acid sequence, 143 residues long: Large ribosomal subunit protein uL15 (143 aa).

A disordered region spans residues 20-52 (GRGIGSGKGKTAGRGHKGQHSRAGGYHKVGFEG). Positions 30–39 (TAGRGHKGQH) are enriched in basic residues.

It belongs to the universal ribosomal protein uL15 family. As to quaternary structure, part of the 50S ribosomal subunit.

Functionally, binds to the 23S rRNA. This chain is Large ribosomal subunit protein uL15, found in Coxiella burnetii (strain CbuK_Q154) (Coxiella burnetii (strain Q154)).